Here is a 316-residue protein sequence, read N- to C-terminus: 4-hydroxy-3-methylbut-2-enyl diphosphate reductase (316 aa).

Cysteine 12 is a [4Fe-4S] cluster binding site. Residues histidine 41 and histidine 74 each coordinate (2E)-4-hydroxy-3-methylbut-2-enyl diphosphate. 2 residues coordinate dimethylallyl diphosphate: histidine 41 and histidine 74. Isopentenyl diphosphate-binding residues include histidine 41 and histidine 74. Cysteine 96 is a binding site for [4Fe-4S] cluster. Histidine 124 is a binding site for (2E)-4-hydroxy-3-methylbut-2-enyl diphosphate. Residue histidine 124 coordinates dimethylallyl diphosphate. Residue histidine 124 participates in isopentenyl diphosphate binding. The active-site Proton donor is glutamate 126. Threonine 167 is a binding site for (2E)-4-hydroxy-3-methylbut-2-enyl diphosphate. Cysteine 197 serves as a coordination point for [4Fe-4S] cluster. 4 residues coordinate (2E)-4-hydroxy-3-methylbut-2-enyl diphosphate: serine 225, serine 226, asparagine 227, and serine 269. Residues serine 225, serine 226, asparagine 227, and serine 269 each contribute to the dimethylallyl diphosphate site. Isopentenyl diphosphate contacts are provided by serine 225, serine 226, asparagine 227, and serine 269.

Belongs to the IspH family. As to quaternary structure, homodimer. [4Fe-4S] cluster is required as a cofactor.

It catalyses the reaction isopentenyl diphosphate + 2 oxidized [2Fe-2S]-[ferredoxin] + H2O = (2E)-4-hydroxy-3-methylbut-2-enyl diphosphate + 2 reduced [2Fe-2S]-[ferredoxin] + 2 H(+). The enzyme catalyses dimethylallyl diphosphate + 2 oxidized [2Fe-2S]-[ferredoxin] + H2O = (2E)-4-hydroxy-3-methylbut-2-enyl diphosphate + 2 reduced [2Fe-2S]-[ferredoxin] + 2 H(+). It functions in the pathway isoprenoid biosynthesis; dimethylallyl diphosphate biosynthesis; dimethylallyl diphosphate from (2E)-4-hydroxy-3-methylbutenyl diphosphate: step 1/1. The protein operates within isoprenoid biosynthesis; isopentenyl diphosphate biosynthesis via DXP pathway; isopentenyl diphosphate from 1-deoxy-D-xylulose 5-phosphate: step 6/6. In terms of biological role, catalyzes the conversion of 1-hydroxy-2-methyl-2-(E)-butenyl 4-diphosphate (HMBPP) into a mixture of isopentenyl diphosphate (IPP) and dimethylallyl diphosphate (DMAPP). Acts in the terminal step of the DOXP/MEP pathway for isoprenoid precursor biosynthesis. In Pectobacterium carotovorum subsp. carotovorum (strain PC1), this protein is 4-hydroxy-3-methylbut-2-enyl diphosphate reductase.